The primary structure comprises 510 residues: ATP synthase subunit alpha (510 aa).

170–177 (GDRQTGKT) provides a ligand contact to ATP.

This sequence belongs to the ATPase alpha/beta chains family. F-type ATPases have 2 components, CF(1) - the catalytic core - and CF(0) - the membrane proton channel. CF(1) has five subunits: alpha(3), beta(3), gamma(1), delta(1), epsilon(1). CF(0) has three main subunits: a(1), b(2) and c(9-12). The alpha and beta chains form an alternating ring which encloses part of the gamma chain. CF(1) is attached to CF(0) by a central stalk formed by the gamma and epsilon chains, while a peripheral stalk is formed by the delta and b chains.

Its subcellular location is the cell inner membrane. The enzyme catalyses ATP + H2O + 4 H(+)(in) = ADP + phosphate + 5 H(+)(out). Produces ATP from ADP in the presence of a proton gradient across the membrane. The alpha chain is a regulatory subunit. The chain is ATP synthase subunit alpha from Acidiphilium cryptum (strain JF-5).